The primary structure comprises 350 residues: Phenylalanine--tRNA ligase alpha subunit (350 aa).

Glu262 serves as a coordination point for Mg(2+).

This sequence belongs to the class-II aminoacyl-tRNA synthetase family. Phe-tRNA synthetase alpha subunit type 1 subfamily. As to quaternary structure, tetramer of two alpha and two beta subunits. Mg(2+) serves as cofactor.

It localises to the cytoplasm. It carries out the reaction tRNA(Phe) + L-phenylalanine + ATP = L-phenylalanyl-tRNA(Phe) + AMP + diphosphate + H(+). The polypeptide is Phenylalanine--tRNA ligase alpha subunit (pheS) (Thermus thermophilus (strain ATCC 27634 / DSM 579 / HB8)).